The primary structure comprises 269 residues: Cbp/p300-interacting transactivator 2 (269 aa).

Residues 142 to 200 (AGHQMNGTNQHFRDCNPKHSGGSSTPGGAGGSGTPGGSGGTSGGAGGSSAGGSGGGSTM) are disordered. Over residues 165–198 (STPGGAGGSGTPGGSGGTSGGAGGSSAGGSGGGS) the composition is skewed to gly residues.

Belongs to the CITED family. Interacts (via C-terminus) with EP300 (via CH1 domain); the interaction is stimulated in response to hypoxia. Interacts with PPARA. Interacts (via C-terminus) with TFAP2A, TFAP2B and TFAP2C. Interacts (via C-terminus) with SMAD2. Interacts (via C-terminus) with SMAD3 (via MH2 domain). Interacts with LHX2 (via LIM domains). Interacts with WT1 isoform 1 and isoform 3. As to expression, ubiquitous.

The protein localises to the nucleus. Functionally, transcriptional coactivator of the p300/CBP-mediated transcription complex. Acts as a bridge, linking TFAP2 transcription factors and the p300/CBP transcriptional coactivator complex in order to stimulate TFAP2-mediated transcriptional activation. Positively regulates TGF-beta signaling through its association with the SMAD/p300/CBP-mediated transcriptional coactivator complex. Stimulates the peroxisome proliferator-activated receptors PPARA transcriptional activity. Enhances estrogen-dependent transactivation mediated by estrogen receptors. Also acts as a transcriptional corepressor; interferes with the binding of the transcription factors HIF1A or STAT2 and the p300/CBP transcriptional coactivator complex. Participates in sex determination and early gonad development by stimulating transcription activation of SRY. Plays a role in controlling left-right patterning during embryogenesis; potentiates transcriptional activation of NODAL-mediated gene transcription in the left lateral plate mesoderm (LPM). Plays an essential role in differentiation of the adrenal cortex from the adrenogonadal primordium (AGP); stimulates WT1-mediated transcription activation thereby up-regulating the nuclear hormone receptor NR5A1 promoter activity. Associates with chromatin to the PITX2 P1 promoter region. The sequence is that of Cbp/p300-interacting transactivator 2 (Cited2) from Mus musculus (Mouse).